Consider the following 193-residue polypeptide: Small ribosomal subunit protein eS7 (193 aa).

Belongs to the eukaryotic ribosomal protein eS7 family.

In Dictyostelium discoideum (Social amoeba), this protein is Small ribosomal subunit protein eS7 (rps7).